Here is a 634-residue protein sequence, read N- to C-terminus: Transmembrane and coiled-coil domain-containing protein 4 (634 aa).

A coiled-coil region spans residues 150-190; that stretch reads EELDVLEEMFLESLKEIKEEESEMAEASRKKKENRRKWKRY. A run of 3 helical transmembrane segments spans residues 203–223, 231–251, and 346–366; these read VIGV…ATII, LGSA…GAGL, and LSGI…ANVI. Positions 542-612 are disordered; it reads EPRQAAAAAS…ERPPICSHGM (71 aa). Positions 552-583 are enriched in polar residues; it reads SGETPHQVGQTQGPISGDTSKLAMSTDPSQAQ.

This sequence belongs to the TMCO4 family.

Its subcellular location is the membrane. This chain is Transmembrane and coiled-coil domain-containing protein 4 (TMCO4), found in Homo sapiens (Human).